The following is a 364-amino-acid chain: PDZ and LIM domain protein 3 (364 aa).

A PDZ domain is found at 1-84; sequence MPQTVILPGP…QLCLKIDRGE (84 aa). Phosphoserine is present on residues Ser18, Ser93, and Ser264. Residues 292–351 form the LIM zinc-binding domain; it reads PLCDKCGSGIVGAVVKARDKYRHPECFVCADCNLNLKQKGYFFIEGELYCETHARARTKP.

Interacts with ACTN2. Forms a heterodimer with PDLIM4 (via LIM domain). Isoform 1 is highly expressed in differentiated skeletal muscle. Isoform 2 is heart-specific.

The protein localises to the cytoplasm. It localises to the myofibril. Its subcellular location is the sarcomere. The protein resides in the z line. Its function is as follows. May play a role in the organization of actin filament arrays within muscle cells. In Homo sapiens (Human), this protein is PDZ and LIM domain protein 3 (PDLIM3).